The sequence spans 605 residues: Alpha-1,3-galactosidase B (605 aa).

Residues 1 to 19 form the signal peptide; sequence MKRIIFNFCFVWLAVSAFA. PbH1 repeat units follow at residues 428-450, 451-473, and 484-538; these read CPEV…LFST, PLKT…LLCG, and CRNV…VIED.

The protein belongs to the glycosyl hydrolase 110 family. B subfamily.

It carries out the reaction Hydrolysis of terminal, non-reducing branched (1-&gt;3)-alpha-D-galactosidic residues, producing free D-galactose.. The catalysed reaction is Hydrolysis of terminal, non-reducing linear (1-&gt;3)-alpha-D-galactosidic residues, producing free D-galactose.. The enzyme catalyses Hydrolysis of terminal, non-reducing alpha-D-galactose residues in alpha-D-galactosides, including galactose oligosaccharides, galactomannans and galactolipids.. In terms of biological role, alpha-galactosidase. Removes both branched alpha-1,3-linked galactose residues of blood group B antigens and linear alpha-1,3-linked galactose structures. This is Alpha-1,3-galactosidase B (glaB2) from Phocaeicola vulgatus (strain ATCC 8482 / DSM 1447 / JCM 5826 / CCUG 4940 / NBRC 14291 / NCTC 11154) (Bacteroides vulgatus).